We begin with the raw amino-acid sequence, 201 residues long: Large ribosomal subunit protein uL4 (201 aa).

The interval 42 to 67 (GNSAQKTRSEVSGGGKKPWNQKGTGR) is disordered.

This sequence belongs to the universal ribosomal protein uL4 family. Part of the 50S ribosomal subunit.

One of the primary rRNA binding proteins, this protein initially binds near the 5'-end of the 23S rRNA. It is important during the early stages of 50S assembly. It makes multiple contacts with different domains of the 23S rRNA in the assembled 50S subunit and ribosome. In terms of biological role, forms part of the polypeptide exit tunnel. The sequence is that of Large ribosomal subunit protein uL4 from Legionella pneumophila (strain Corby).